We begin with the raw amino-acid sequence, 126 residues long: Anti-adapter protein IraD (126 aa).

This sequence belongs to the GpW/Gp25 family. IraD subfamily. As to quaternary structure, interacts with RssB.

It localises to the cytoplasm. Inhibits RpoS proteolysis by regulating RssB activity, thereby increasing the stability of the sigma stress factor RpoS during oxidative stress. Its effect on RpoS stability is due to its interaction with RssB, which probably blocks the interaction of RssB with RpoS, and the consequent delivery of the RssB-RpoS complex to the ClpXP protein degradation pathway. This Salmonella paratyphi A (strain ATCC 9150 / SARB42) protein is Anti-adapter protein IraD.